The chain runs to 99 residues: Small integral membrane protein 14 (99 aa).

The Lumenal segment spans residues 1-49 (MAEGGFDPCECVCSHEHAMRRLINLLRQSQSYCTDTECLQELPGPSSDN). A helical membrane pass occupies residues 50-70 (GISITMILMAWMVIAVILFLL). The Cytoplasmic segment spans residues 71-99 (RPPNLRGSNLTGKPASPHNGQDPPAPPVD). The tract at residues 78-99 (SNLTGKPASPHNGQDPPAPPVD) is disordered.

The protein localises to the endoplasmic reticulum membrane. The polypeptide is Small integral membrane protein 14 (SMIM14) (Bos taurus (Bovine)).